A 328-amino-acid chain; its full sequence is Stress response kinase A (328 aa).

Asp201 (proton acceptor) is an active-site residue. Residues Asn206 and Asp217 each contribute to the Mg(2+) site. Asp217 is an active-site residue.

Belongs to the SrkA/RdoA protein kinase family. In terms of assembly, monomer. The cofactor is Mg(2+).

The protein localises to the cytoplasm. The enzyme catalyses L-seryl-[protein] + ATP = O-phospho-L-seryl-[protein] + ADP + H(+). It catalyses the reaction L-threonyl-[protein] + ATP = O-phospho-L-threonyl-[protein] + ADP + H(+). Its function is as follows. A protein kinase that phosphorylates Ser and Thr residues. Probably acts to suppress the effects of stress linked to accumulation of reactive oxygen species. Probably involved in the extracytoplasmic stress response. The protein is Stress response kinase A of Salmonella choleraesuis (strain SC-B67).